Here is a 327-residue protein sequence, read N- to C-terminus: Aspartate carbamoyltransferase catalytic subunit (327 aa).

Carbamoyl phosphate is bound by residues R67 and T68. Residue K95 participates in L-aspartate binding. The carbamoyl phosphate site is built by R117, H145, and Q148. R178 and R232 together coordinate L-aspartate. Residues G273 and P274 each contribute to the carbamoyl phosphate site.

Belongs to the aspartate/ornithine carbamoyltransferase superfamily. ATCase family. Heterododecamer (2C3:3R2) of six catalytic PyrB chains organized as two trimers (C3), and six regulatory PyrI chains organized as three dimers (R2).

It carries out the reaction carbamoyl phosphate + L-aspartate = N-carbamoyl-L-aspartate + phosphate + H(+). It functions in the pathway pyrimidine metabolism; UMP biosynthesis via de novo pathway; (S)-dihydroorotate from bicarbonate: step 2/3. In terms of biological role, catalyzes the condensation of carbamoyl phosphate and aspartate to form carbamoyl aspartate and inorganic phosphate, the committed step in the de novo pyrimidine nucleotide biosynthesis pathway. The chain is Aspartate carbamoyltransferase catalytic subunit from Parvibaculum lavamentivorans (strain DS-1 / DSM 13023 / NCIMB 13966).